We begin with the raw amino-acid sequence, 303 residues long: WD repeat-containing protein 38 (303 aa).

7 WD repeats span residues 24–63, 66–105, 108–147, 150–189, 195–233, 236–277, and 279–303; these read QHHGEVNCSAFSPDGRTLLTASDDGCVYVWGTKSGRLLWR, GHRGPVKSCCFSPDGRLIASSSSDHSIRLWDVARSKCLHV, GHQRSVETVSFSPDSKQLASGGWDKRAIVWEVQSGRRVHL, GHCDSIQSSDFSPTSDSLATGSWDSTVHIWDLRASTPVVS, GHTGNISCLCYSASGLLASGSWDKTICVWKPTTNNLPLQ, GHTI…ETLK, and MLDVAHACIFTPDGKLLVSGAAVTR.

This Mus musculus (Mouse) protein is WD repeat-containing protein 38 (Wdr38).